The sequence spans 227 residues: Endonuclease V (227 aa).

Residues Asp-46 and Asp-114 each coordinate Mg(2+).

It belongs to the endonuclease V family. Requires Mg(2+) as cofactor.

It localises to the cytoplasm. The catalysed reaction is Endonucleolytic cleavage at apurinic or apyrimidinic sites to products with a 5'-phosphate.. Functionally, DNA repair enzyme involved in the repair of deaminated bases. Selectively cleaves double-stranded DNA at the second phosphodiester bond 3' to a deoxyinosine leaving behind the intact lesion on the nicked DNA. This Alkalilimnicola ehrlichii (strain ATCC BAA-1101 / DSM 17681 / MLHE-1) protein is Endonuclease V.